The following is a 297-amino-acid chain: Methionyl-tRNA formyltransferase (297 aa).

Positions 31-52 (QPPRAAGRGQKPRPSPVHRAAE) are disordered. 108–111 (SLLP) lines the (6S)-5,6,7,8-tetrahydrofolate pocket.

It belongs to the Fmt family.

It catalyses the reaction L-methionyl-tRNA(fMet) + (6R)-10-formyltetrahydrofolate = N-formyl-L-methionyl-tRNA(fMet) + (6S)-5,6,7,8-tetrahydrofolate + H(+). Its function is as follows. Attaches a formyl group to the free amino group of methionyl-tRNA(fMet). The formyl group appears to play a dual role in the initiator identity of N-formylmethionyl-tRNA by promoting its recognition by IF2 and preventing the misappropriation of this tRNA by the elongation apparatus. The polypeptide is Methionyl-tRNA formyltransferase (Paracoccus denitrificans (strain Pd 1222)).